A 235-amino-acid polypeptide reads, in one-letter code: Uridylate kinase (235 aa).

8-11 (KFSG) contributes to the ATP binding site. The tract at residues 16-21 (GAEGYG) is involved in allosteric activation by GTP. G50 lines the UMP pocket. The ATP site is built by G51 and R55. UMP is bound by residues D71 and 132-139 (TGNPYFTT). 3 residues coordinate ATP: T159, Y165, and D168.

It belongs to the UMP kinase family. As to quaternary structure, homohexamer.

Its subcellular location is the cytoplasm. It catalyses the reaction UMP + ATP = UDP + ADP. It participates in pyrimidine metabolism; CTP biosynthesis via de novo pathway; UDP from UMP (UMPK route): step 1/1. Its activity is regulated as follows. Allosterically activated by GTP. Inhibited by UTP. In terms of biological role, catalyzes the reversible phosphorylation of UMP to UDP. In Aliarcobacter butzleri (strain RM4018) (Arcobacter butzleri), this protein is Uridylate kinase.